We begin with the raw amino-acid sequence, 414 residues long: CCA-adding enzyme (414 aa).

Positions 8 and 11 each coordinate ATP. CTP contacts are provided by G8 and R11. Mg(2+) contacts are provided by D21 and D23. R91, R137, and R140 together coordinate ATP. CTP-binding residues include R91, R137, and R140.

This sequence belongs to the tRNA nucleotidyltransferase/poly(A) polymerase family. Bacterial CCA-adding enzyme type 2 subfamily. Mg(2+) is required as a cofactor.

The catalysed reaction is a tRNA precursor + 2 CTP + ATP = a tRNA with a 3' CCA end + 3 diphosphate. It catalyses the reaction a tRNA with a 3' CCA end + 2 CTP + ATP = a tRNA with a 3' CCACCA end + 3 diphosphate. Catalyzes the addition and repair of the essential 3'-terminal CCA sequence in tRNAs without using a nucleic acid template. Adds these three nucleotides in the order of C, C, and A to the tRNA nucleotide-73, using CTP and ATP as substrates and producing inorganic pyrophosphate. tRNA 3'-terminal CCA addition is required both for tRNA processing and repair. Also involved in tRNA surveillance by mediating tandem CCA addition to generate a CCACCA at the 3' terminus of unstable tRNAs. While stable tRNAs receive only 3'-terminal CCA, unstable tRNAs are marked with CCACCA and rapidly degraded. This is CCA-adding enzyme from Buchnera aphidicola subsp. Acyrthosiphon pisum (strain 5A).